We begin with the raw amino-acid sequence, 255 residues long: Urease accessory protein UreD 1 (255 aa).

This sequence belongs to the UreD family. As to quaternary structure, ureD, UreF and UreG form a complex that acts as a GTP-hydrolysis-dependent molecular chaperone, activating the urease apoprotein by helping to assemble the nickel containing metallocenter of UreC. The UreE protein probably delivers the nickel.

The protein localises to the cytoplasm. Required for maturation of urease via the functional incorporation of the urease nickel metallocenter. The polypeptide is Urease accessory protein UreD 1 (Streptomyces griseus subsp. griseus (strain JCM 4626 / CBS 651.72 / NBRC 13350 / KCC S-0626 / ISP 5235)).